The following is a 71-amino-acid chain: Non-disulfide-bridged peptide 5.5 (71 aa).

Residues 1 to 23 (MKTQFIVLIVAIVFLQLLSQSEA) form the signal peptide. A Leucine amide modification is found at Leu36. A propeptide spanning residues 40 to 71 (DLRHLDLDQFDDMFDQPEISAADMKFLQDLLR) is cleaved from the precursor.

Belongs to the non-disulfide-bridged peptide (NDBP) superfamily. Short antimicrobial peptide (group 4) family. As to expression, expressed by the venom gland.

The protein localises to the secreted. Its subcellular location is the target cell membrane. Its function is as follows. Antimicrobial peptide. Is active on Mycobacterium abscessus subsp. massiliense (MBC=200 uM), a rapidly growing and emerging pathogen associated with healthcare infections. Also shows antifungal activities. Has a weak hemolytic activity on human erythrocytes (10% at 610 uM), indicating a low toxicity (therapeutic index (TI)=3.05). In addition, treatment of infected macrophages reduces the bacterial load. In vivo, treatment of M.abscessus-infected mice causes a decrease in the bacterial load in the lungs and liver. The polypeptide is Non-disulfide-bridged peptide 5.5 (Hoffmannihadrurus gertschi (Scorpion)).